Reading from the N-terminus, the 417-residue chain is Tyrosine--tRNA ligase (417 aa).

Residue Tyr-34 participates in L-tyrosine binding. The 'HIGH' region motif lies at 39-48 (PSGDSLHIGH). Residues Tyr-165 and Gln-169 each contribute to the L-tyrosine site. The 'KMSKS' region motif lies at 227–231 (KFGKT). Residue Lys-230 coordinates ATP. The 67-residue stretch at 349–415 (ANIVDWLVDT…GKKNYTLAKV (67 aa)) folds into the S4 RNA-binding domain.

The protein belongs to the class-I aminoacyl-tRNA synthetase family. TyrS type 1 subfamily. As to quaternary structure, homodimer.

The protein resides in the cytoplasm. It catalyses the reaction tRNA(Tyr) + L-tyrosine + ATP = L-tyrosyl-tRNA(Tyr) + AMP + diphosphate + H(+). Functionally, catalyzes the attachment of tyrosine to tRNA(Tyr) in a two-step reaction: tyrosine is first activated by ATP to form Tyr-AMP and then transferred to the acceptor end of tRNA(Tyr). In Limosilactobacillus fermentum (strain NBRC 3956 / LMG 18251) (Lactobacillus fermentum), this protein is Tyrosine--tRNA ligase.